The following is a 354-amino-acid chain: MGFCIPLRSKMLKRVSRKSSSILARRPTPKKMNIVTDSENRLKKNSYIENTNQGNILMDSIFVSTMPVETLFGSYITDDNDDYELKDLLNVTYNIKPVIVPDIKLDSVLDRDGNFRPADCFLVKLKHSDGFTKGALYLGHSAGFTATICLKNEGVSGLYIPGTSVVRSNICQGDTIVSRSSRGVQFLPQIGGEAIFLIVSLCPTKKLVETGFVIPEISSNDNAKIAARILSEKRKDIIAHINTLIQYRQQLELAYYNSCMLTEFLHYCNSYADTIKESLLKETIQKDINIIHTNITTLLNETAKVIKLVKSLVDKEDTDIVNNFITKEIKNCGGVKNRDKIVNSLSLSNLDFRL.

The protein belongs to the orthopoxvirus OPG055 family.

Its function is as follows. Stimulates increases in peripheral microtubule dynamics and may increase the motility of the infected cells, contributing to cell-to-cell spread of the virus. Seems to inhibit the signaling via the GTPase RHOA and DIAPH1/mDia. This is Protein OPG055 (OPG055) from Cynomys gunnisoni (Gunnison's prairie dog).